Consider the following 364-residue polypeptide: Cell cycle control protein 50A (364 aa).

The interval 1 to 28 (MAMNYSAKDEVDGGPAGPPGGAAKTRRP) is disordered. An N-acetylalanine modification is found at alanine 2. At 2–49 (AMNYSAKDEVDGGPAGPPGGAAKTRRPDNTAFKQQRLPAWQPILTAGT) the chain is on the cytoplasmic side. Residues 50 to 70 (VLPTFFIIGLIFIPIGIGIFV) form a helical membrane-spanning segment. The Exoplasmic loop portion of the chain corresponds to 71-328 (TSNNIREIEI…SWMGGKNPFL (258 aa)). 3 disulfides stabilise this stretch: cysteine 91–cysteine 104, cysteine 94–cysteine 102, and cysteine 157–cysteine 171. The N-linked (GlcNAc...) asparagine glycan is linked to asparagine 98. Asparagine 297 is a glycosylation site (N-linked (GlcNAc...) asparagine). Residues 329 to 349 (GIAYITIGSISFLLGVVLLVI) traverse the membrane as a helical segment. The Cytoplasmic portion of the chain corresponds to 350–364 (NHKYRNSSNTADITI).

This sequence belongs to the CDC50/LEM3 family. Component of various P4-ATPase flippase complexes which consists of a catalytic alpha subunit and an accessory beta subunit. Interacts with ATP8A1 to form a flippase complex; this complex forms an intermediate phosphoenzyme. The ATP8A2:TMEM30A flippase complex has been purified, and ATP8B1:TMEM30A and ATP8B2:TMEM30A flippase complexes have been shown to form intermediate phosphoenzymes in vitro. Interacts with alpha subunits ATP8A1, ATP8B1, ATP8B2, ATP8B4, ATP10A, ATP10B, ATP10D, ATP11A, ATP11B and ATP11C. In terms of processing, N-glycosylated. Contains high mannose-type oligosaccharides. In terms of tissue distribution, expressed in photoreceptor cells; detected in retina outer segment (at protein level). Detected in hepatocytes liver sinusoidal endothelial cells and kidney brush border of the proximal tubules (at protein level). Expressed in brain (at protein level).

The protein resides in the membrane. It localises to the cell membrane. Its subcellular location is the golgi apparatus. It is found in the cytoplasmic vesicle. The protein localises to the secretory vesicle membrane. The protein resides in the apical cell membrane. Accessory component of a P4-ATPase flippase complex which catalyzes the hydrolysis of ATP coupled to the transport of aminophospholipids from the outer to the inner leaflet of various membranes and ensures the maintenance of asymmetric distribution of phospholipids. Phospholipid translocation also seems to be implicated in vesicle formation and in uptake of lipid signaling molecules. The beta subunit may assist in binding of the phospholipid substrate. Required for the proper folding, assembly and ER to Golgi exit of the ATP8A2:TMEM30A flippase complex. ATP8A2:TMEM30A may be involved in regulation of neurite outgrowth, and, reconstituted to liposomes, predomiminantly transports phosphatidylserine (PS) and to a lesser extent phosphatidylethanolamine (PE). The ATP8A1:TMEM30A flippase complex seems to play a role in regulation of cell migration probably involving flippase-mediated translocation of phosphatidylethanolamine (PE) at the plasma membrane. Required for the formation of the ATP8A2, ATP8B1 and ATP8B2 P-type ATPAse intermediate phosphoenzymes. Involved in uptake of platelet-activating factor (PAF). Can also mediate the export of alpha subunits ATP8A1, ATP8B1, ATP8B2, ATP8B4, ATP10A, ATP10B, ATP10D, ATP11A, ATP11B and ATP11C from the ER to other membrane localizations. This chain is Cell cycle control protein 50A, found in Mus musculus (Mouse).